Reading from the N-terminus, the 79-residue chain is MSQLMGIITRLQSLQETAEAANEPMQRYFEVNGEKICSVKYFEKNQTFELTVFQKGEKPNTYPFDNIDMVSIEIFELLQ.

A signal peptide spans 1–20 (MSQLMGIITRLQSLQETAEA).

This is an uncharacterized protein from Bacillus subtilis (strain 168).